Reading from the N-terminus, the 46-residue chain is Esculentin-1 (46 aa).

Cysteines 40 and 46 form a disulfide.

This sequence belongs to the frog skin active peptide (FSAP) family. Brevinin subfamily. In terms of tissue distribution, expressed by the skin glands.

The protein localises to the secreted. In terms of biological role, shows antibacterial activity against representative Gram-negative and Gram-positive bacterial species, and hemolytic activity. This chain is Esculentin-1, found in Pelophylax lessonae (Pool frog).